The chain runs to 203 residues: Imidazoleglycerol-phosphate dehydratase (203 aa).

This sequence belongs to the imidazoleglycerol-phosphate dehydratase family.

Its subcellular location is the cytoplasm. It catalyses the reaction D-erythro-1-(imidazol-4-yl)glycerol 3-phosphate = 3-(imidazol-4-yl)-2-oxopropyl phosphate + H2O. It functions in the pathway amino-acid biosynthesis; L-histidine biosynthesis; L-histidine from 5-phospho-alpha-D-ribose 1-diphosphate: step 6/9. This Salinispora tropica (strain ATCC BAA-916 / DSM 44818 / JCM 13857 / NBRC 105044 / CNB-440) protein is Imidazoleglycerol-phosphate dehydratase.